Consider the following 463-residue polypeptide: uncharacterized protein (463 aa).

It belongs to the mycobacterial PPE family.

This is an uncharacterized protein from Mycobacterium tuberculosis (strain ATCC 25618 / H37Rv).